We begin with the raw amino-acid sequence, 425 residues long: Trigger factor (425 aa).

Residues 158 to 231 enclose the PPIase FKBP-type domain; it reads GDLVRISMEV…VQEVYRRTLP (74 aa).

Belongs to the FKBP-type PPIase family. Tig subfamily.

It localises to the cytoplasm. It catalyses the reaction [protein]-peptidylproline (omega=180) = [protein]-peptidylproline (omega=0). In terms of biological role, involved in protein export. Acts as a chaperone by maintaining the newly synthesized protein in an open conformation. Functions as a peptidyl-prolyl cis-trans isomerase. This Thermotoga neapolitana (strain ATCC 49049 / DSM 4359 / NBRC 107923 / NS-E) protein is Trigger factor.